A 274-amino-acid polypeptide reads, in one-letter code: NADPH-dependent 7-cyano-7-deazaguanine reductase (274 aa).

Substrate is bound at residue V80–S82. S82 to K83 contributes to the NADPH binding site. Residue C181 is the Thioimide intermediate of the active site. Catalysis depends on D188, which acts as the Proton donor. A substrate-binding site is contributed by H220–E221. R249–G250 serves as a coordination point for NADPH.

Belongs to the GTP cyclohydrolase I family. QueF type 2 subfamily. Homodimer.

The protein resides in the cytoplasm. It catalyses the reaction 7-aminomethyl-7-carbaguanine + 2 NADP(+) = 7-cyano-7-deazaguanine + 2 NADPH + 3 H(+). It functions in the pathway tRNA modification; tRNA-queuosine biosynthesis. Catalyzes the NADPH-dependent reduction of 7-cyano-7-deazaguanine (preQ0) to 7-aminomethyl-7-deazaguanine (preQ1). This is NADPH-dependent 7-cyano-7-deazaguanine reductase from Burkholderia vietnamiensis (strain G4 / LMG 22486) (Burkholderia cepacia (strain R1808)).